Here is a 247-residue protein sequence, read N- to C-terminus: tRNA pseudouridine synthase A (247 aa).

Asp52 acts as the Nucleophile in catalysis. Tyr111 is a binding site for substrate.

This sequence belongs to the tRNA pseudouridine synthase TruA family. As to quaternary structure, homodimer.

It catalyses the reaction uridine(38/39/40) in tRNA = pseudouridine(38/39/40) in tRNA. Its function is as follows. Formation of pseudouridine at positions 38, 39 and 40 in the anticodon stem and loop of transfer RNAs. The polypeptide is tRNA pseudouridine synthase A (Erythrobacter litoralis (strain HTCC2594)).